Consider the following 228-residue polypeptide: UPF0758 protein SH1266 (228 aa).

In terms of domain architecture, MPN spans 102–224 (KITSPSDVSN…YASLVEEGYF (123 aa)). The Zn(2+) site is built by His173, His175, and Asp186. Residues 173 to 186 (HNHPSGDVTPSKED) carry the JAMM motif motif.

It belongs to the UPF0758 family.

In Staphylococcus haemolyticus (strain JCSC1435), this protein is UPF0758 protein SH1266.